Reading from the N-terminus, the 130-residue chain is Large ribosomal subunit protein eL34 (130 aa).

Residues 111–130 form a disordered region; it reads KPVSKPPKIQKTAKAASKSK.

It belongs to the eukaryotic ribosomal protein eL34 family.

The sequence is that of Large ribosomal subunit protein eL34 (RpL34) from Aedes albopictus (Asian tiger mosquito).